The chain runs to 142 residues: 3-hydroxyacyl-[acyl-carrier-protein] dehydratase FabZ (142 aa).

Histidine 48 is an active-site residue.

It belongs to the thioester dehydratase family. FabZ subfamily.

It is found in the cytoplasm. It carries out the reaction a (3R)-hydroxyacyl-[ACP] = a (2E)-enoyl-[ACP] + H2O. In terms of biological role, involved in unsaturated fatty acids biosynthesis. Catalyzes the dehydration of short chain beta-hydroxyacyl-ACPs and long chain saturated and unsaturated beta-hydroxyacyl-ACPs. This chain is 3-hydroxyacyl-[acyl-carrier-protein] dehydratase FabZ, found in Desulforamulus reducens (strain ATCC BAA-1160 / DSM 100696 / MI-1) (Desulfotomaculum reducens).